The chain runs to 636 residues: Tumor protein p73 (636 aa).

Positions methionine 1–aspartate 46 are transactivation. Threonine 27 is modified (phosphothreonine; by PLK1). Tyrosine 28 bears the Phosphotyrosine; by SRC and HCK mark. The tract at residues arginine 78 to serine 104 is disordered. Residues proline 94–serine 104 show a composition bias toward polar residues. Tyrosine 99 carries the phosphotyrosine; by ABL1 modification. The tract at residues phenylalanine 131–arginine 310 is DNA-binding. Residues cysteine 194, histidine 197, cysteine 258, and cysteine 262 each coordinate Zn(2+). Residues alanine 314–lysine 345 form a disordered region. The interaction with HIPK2 stretch occupies residues lysine 345–leucine 380. Positions lysine 345 to valine 386 are oligomerization. The PPxY motif motif lies at proline 483 to tyrosine 487. The 67-residue stretch at proline 485–glycine 551 folds into the SAM domain. Residue lysine 627 forms a Glycyl lysine isopeptide (Lys-Gly) (interchain with G-Cter in SUMO); in isoform Alpha linkage. A Glycyl lysine isopeptide (Lys-Gly) (interchain with G-Cter in SUMO2) cross-link involves residue lysine 627.

Belongs to the p53 family. Found in a complex with p53/TP53 and CABLES1. The C-terminal oligomerization domain binds to the ABL1 tyrosine kinase SH3 domain. Interacts with HECW2. Isoform Beta interacts homotypically and with p53/TP53, whereas isoform Alpha does not. Isoform Gamma interacts homotypically and with all p73 isoforms. Isoform Delta interacts with isoform Gamma, isoform Alpha, and homotypically. Isoforms Alpha and Beta interact with HIPK2. Isoform Alpha interacts with RANBP9. Isoform Beta interacts with WWOX. Interacts (via SAM domain) with FBXO45 (via B30.2/SPRY domain). Interacts with YAP1 (phosphorylated form). Interacts with HCK (via SH3 domain); this inhibits TP73 activity and degradation. Interacts (via SAM domain) with NQO1; this interaction is NADH-dependent, stabilizes TP73 in response to oxidative stress and protects it from ubiquitin-independent degradation by the 20S proteasome. In terms of assembly, (Microbial infection) Interacts with Epstein-Barr virus protein EBNA6; this interaction inhibits TP73-mediated apoptotic pathway. Zn(2+) is required as a cofactor. Isoform alpha (but not isoform beta) is sumoylated on Lys-627, which potentiates proteasomal degradation but does not affect transcriptional activity. Phosphorylation by PLK1 and PLK3 inhibits the transcription regulator activity and pro-apoptotic function. In terms of processing, higher levels of phosphorylation seen in the brain from patients with Huntington disease. Post-translationally, polyubiquitinated by RCHY1/PIRH2; leading to its degradation by the proteasome. In terms of tissue distribution, expressed in striatal neurons of patients with Huntington disease (at protein level). Brain, kidney, placenta, colon, heart, liver, spleen, skeletal muscle, prostate, thymus and pancreas. Highly expressed in fetal tissue. Expressed in the respiratory epithelium.

It is found in the nucleus. The protein localises to the cytoplasm. In terms of biological role, participates in the apoptotic response to DNA damage. Isoforms containing the transactivation domain are pro-apoptotic, isoforms lacking the domain are anti-apoptotic and block the function of p53 and transactivating p73 isoforms. May be a tumor suppressor protein. Is an activator of FOXJ1 expression. It is an essential factor for the positive regulation of lung ciliated cell differentiation. In Homo sapiens (Human), this protein is Tumor protein p73 (TP73).